The chain runs to 128 residues: Small ribosomal subunit protein bS6 (128 aa).

Belongs to the bacterial ribosomal protein bS6 family.

Functionally, binds together with bS18 to 16S ribosomal RNA. The polypeptide is Small ribosomal subunit protein bS6 (Thermotoga sp. (strain RQ2)).